Consider the following 78-residue polypeptide: Acyl carrier protein (78 aa).

Positions Ser-2–Gln-77 constitute a Carrier domain. Ser-37 is subject to O-(pantetheine 4'-phosphoryl)serine.

This sequence belongs to the acyl carrier protein (ACP) family. Post-translationally, 4'-phosphopantetheine is transferred from CoA to a specific serine of apo-ACP by AcpS. This modification is essential for activity because fatty acids are bound in thioester linkage to the sulfhydryl of the prosthetic group.

It localises to the cytoplasm. Its pathway is lipid metabolism; fatty acid biosynthesis. In terms of biological role, carrier of the growing fatty acid chain in fatty acid biosynthesis. This chain is Acyl carrier protein, found in Pectobacterium atrosepticum (strain SCRI 1043 / ATCC BAA-672) (Erwinia carotovora subsp. atroseptica).